Consider the following 603-residue polypeptide: Probable methyltransferase PMT4 (603 aa).

The Cytoplasmic portion of the chain corresponds to 1-12 (MKVASVIGLRPR). A helical; Signal-anchor for type II membrane protein membrane pass occupies residues 13–33 (ISGLLFLTLGVIALITILVPN). Over 34-603 (SDSSSTTSTT…LVCQKPLLKK (570 aa)) the chain is Lumenal. Residues N96 and N393 are each glycosylated (N-linked (GlcNAc...) asparagine).

Belongs to the methyltransferase superfamily.

It is found in the endoplasmic reticulum membrane. In Arabidopsis thaliana (Mouse-ear cress), this protein is Probable methyltransferase PMT4.